The primary structure comprises 410 residues: Histone-lysine N-methyltransferase SUV39H2 (410 aa).

Residues 47-105 (YEVEYLCDYKVVKDMEYYLVKWKGWPDSTNTWEPLQNLKCPLLLQQFSNDKHNYLSQVK) enclose the Chromo domain. The Pre-SET domain occupies 189 to 247 (FGCSCTDCFFQKCCPAEAGVLLAYNKNQQIKIPPGTPIYECNSRCQCGPDCPNRIVQKG). Residues Cys-191, Cys-193, Cys-196, Cys-201, Cys-202, Cys-229, Cys-233, Cys-235, and Cys-239 each contribute to the Zn(2+) site. One can recognise an SET domain in the interval 250 to 373 (YSLCIFRTSN…AGEELTFDYQ (124 aa)). S-adenosyl-L-methionine is bound by residues 261 to 263 (RGW), Tyr-304, and 330 to 331 (NH). Residue Cys-333 participates in Zn(2+) binding. 3 positions are modified to phosphoserine: Ser-381, Ser-384, and Ser-388. Residues 394–410 (VRTVCKCGAVTCRGYLN) enclose the Post-SET domain. Residues Cys-398, Cys-400, and Cys-405 each coordinate Zn(2+).

The protein belongs to the class V-like SAM-binding methyltransferase superfamily. Histone-lysine methyltransferase family. Suvar3-9 subfamily. As to quaternary structure, interacts with SMAD5. The large PER complex involved in the histone methylation is composed of at least PER2, CBX3, TRIM28, SUV39H1 and/or SUV39H2; CBX3 mediates the formation of the complex. Post-translationally, ubiquitinated by the DCX(DCAF13) E3 ubiquitin ligase complex, leading to its degradation.

It is found in the nucleus. It localises to the chromosome. The protein localises to the centromere. It catalyses the reaction L-lysyl(9)-[histone H3] + 3 S-adenosyl-L-methionine = N(6),N(6),N(6)-trimethyl-L-lysyl(9)-[histone H3] + 3 S-adenosyl-L-homocysteine + 3 H(+). In terms of biological role, histone methyltransferase that specifically trimethylates 'Lys-9' of histone H3 using monomethylated H3 'Lys-9' as substrate. H3 'Lys-9' trimethylation represents a specific tag for epigenetic transcriptional repression by recruiting HP1 (CBX1, CBX3 and/or CBX5) proteins to methylated histones. Mainly functions in heterochromatin regions, thereby playing a central role in the establishment of constitutive heterochromatin at pericentric and telomere regions. H3 'Lys-9' trimethylation is also required to direct DNA methylation at pericentric repeats. SUV39H1 is targeted to histone H3 via its interaction with RB1 and is involved in many processes, such as cell cycle regulation, transcriptional repression and regulation of telomere length. May participate in regulation of higher-order chromatin organization during spermatogenesis. Recruited by the large PER complex to the E-box elements of the circadian target genes such as PER2 itself or PER1, contributes to the conversion of local chromatin to a heterochromatin-like repressive state through H3 'Lys-9' trimethylation. The sequence is that of Histone-lysine N-methyltransferase SUV39H2 (SUV39H2) from Macaca fascicularis (Crab-eating macaque).